Reading from the N-terminus, the 839-residue chain is DNA gyrase subunit A (839 aa).

Residues 46 to 510 enclose the Topo IIA-type catalytic domain; that stretch reads LPDARDGLKP…ISEDIDDEDL (465 aa). Tyr134 (O-(5'-phospho-DNA)-tyrosine intermediate) is an active-site residue. The GyrA-box motif lies at 537 to 543; that stretch reads QHRGGVG.

The protein belongs to the type II topoisomerase GyrA/ParC subunit family. As to quaternary structure, heterotetramer, composed of two GyrA and two GyrB chains. In the heterotetramer, GyrA contains the active site tyrosine that forms a transient covalent intermediate with DNA, while GyrB binds cofactors and catalyzes ATP hydrolysis.

It localises to the cytoplasm. The catalysed reaction is ATP-dependent breakage, passage and rejoining of double-stranded DNA.. Its function is as follows. A type II topoisomerase that negatively supercoils closed circular double-stranded (ds) DNA in an ATP-dependent manner to modulate DNA topology and maintain chromosomes in an underwound state. Negative supercoiling favors strand separation, and DNA replication, transcription, recombination and repair, all of which involve strand separation. Also able to catalyze the interconversion of other topological isomers of dsDNA rings, including catenanes and knotted rings. Type II topoisomerases break and join 2 DNA strands simultaneously in an ATP-dependent manner. This chain is DNA gyrase subunit A, found in Mycoplasma pneumoniae (strain ATCC 29342 / M129 / Subtype 1) (Mycoplasmoides pneumoniae).